The sequence spans 339 residues: Uroporphyrinogen decarboxylase (339 aa).

Substrate-binding positions include R21–R25, F40, D71, Y147, S202, and H315.

Belongs to the uroporphyrinogen decarboxylase family. In terms of assembly, homodimer.

Its subcellular location is the cytoplasm. It catalyses the reaction uroporphyrinogen III + 4 H(+) = coproporphyrinogen III + 4 CO2. It participates in porphyrin-containing compound metabolism; protoporphyrin-IX biosynthesis; coproporphyrinogen-III from 5-aminolevulinate: step 4/4. Its function is as follows. Catalyzes the decarboxylation of four acetate groups of uroporphyrinogen-III to yield coproporphyrinogen-III. This chain is Uroporphyrinogen decarboxylase, found in Helicobacter pylori (strain ATCC 700392 / 26695) (Campylobacter pylori).